We begin with the raw amino-acid sequence, 111 residues long: Cryptic phage CTXphi transcriptional repressor RstR (111 aa).

The region spanning 6-60 (IRDLRVERDLNQEEVANGIGVGKNTYLAYEKGTQSPKLETVEKLAKFYGVPIAEL) is the HTH cro/C1-type domain. Residues 17–36 (QEEVANGIGVGKNTYLAYEK) constitute a DNA-binding region (H-T-H motif).

In terms of biological role, transcriptional repressor of the integrated CTXPhi phage gene rstA2. The sequence is that of Cryptic phage CTXphi transcriptional repressor RstR (rstR) from Vibrio cholerae.